A 418-amino-acid chain; its full sequence is Gamma-glutamyl phosphate reductase (418 aa).

The protein belongs to the gamma-glutamyl phosphate reductase family.

It is found in the cytoplasm. It carries out the reaction L-glutamate 5-semialdehyde + phosphate + NADP(+) = L-glutamyl 5-phosphate + NADPH + H(+). It functions in the pathway amino-acid biosynthesis; L-proline biosynthesis; L-glutamate 5-semialdehyde from L-glutamate: step 2/2. Catalyzes the NADPH-dependent reduction of L-glutamate 5-phosphate into L-glutamate 5-semialdehyde and phosphate. The product spontaneously undergoes cyclization to form 1-pyrroline-5-carboxylate. The sequence is that of Gamma-glutamyl phosphate reductase from Desulfatibacillum aliphaticivorans.